The following is a 225-amino-acid chain: 2-C-methyl-D-erythritol 4-phosphate cytidylyltransferase (225 aa).

Belongs to the IspD/TarI cytidylyltransferase family. IspD subfamily.

It catalyses the reaction 2-C-methyl-D-erythritol 4-phosphate + CTP + H(+) = 4-CDP-2-C-methyl-D-erythritol + diphosphate. It participates in isoprenoid biosynthesis; isopentenyl diphosphate biosynthesis via DXP pathway; isopentenyl diphosphate from 1-deoxy-D-xylulose 5-phosphate: step 2/6. Functionally, catalyzes the formation of 4-diphosphocytidyl-2-C-methyl-D-erythritol from CTP and 2-C-methyl-D-erythritol 4-phosphate (MEP). In Clostridium perfringens (strain ATCC 13124 / DSM 756 / JCM 1290 / NCIMB 6125 / NCTC 8237 / Type A), this protein is 2-C-methyl-D-erythritol 4-phosphate cytidylyltransferase.